Here is a 64-residue protein sequence, read N- to C-terminus: Large ribosomal subunit protein uL29 (64 aa).

It belongs to the universal ribosomal protein uL29 family.

In Chloroherpeton thalassium (strain ATCC 35110 / GB-78), this protein is Large ribosomal subunit protein uL29.